Reading from the N-terminus, the 226-residue chain is Endonuclease V (226 aa).

The Mg(2+) site is built by Asp43 and Asp111.

The protein belongs to the endonuclease V family. The cofactor is Mg(2+).

It is found in the cytoplasm. It catalyses the reaction Endonucleolytic cleavage at apurinic or apyrimidinic sites to products with a 5'-phosphate.. Functionally, DNA repair enzyme involved in the repair of deaminated bases. Selectively cleaves double-stranded DNA at the second phosphodiester bond 3' to a deoxyinosine leaving behind the intact lesion on the nicked DNA. The protein is Endonuclease V of Nocardia farcinica (strain IFM 10152).